We begin with the raw amino-acid sequence, 468 residues long: ATP synthase subunit beta (468 aa).

155 to 162 (GGAGVGKT) lines the ATP pocket.

This sequence belongs to the ATPase alpha/beta chains family. F-type ATPases have 2 components, CF(1) - the catalytic core - and CF(0) - the membrane proton channel. CF(1) has five subunits: alpha(3), beta(3), gamma(1), delta(1), epsilon(1). CF(0) has three main subunits: a(1), b(2) and c(9-12). The alpha and beta chains form an alternating ring which encloses part of the gamma chain. CF(1) is attached to CF(0) by a central stalk formed by the gamma and epsilon chains, while a peripheral stalk is formed by the delta and b chains.

It localises to the cell inner membrane. The catalysed reaction is ATP + H2O + 4 H(+)(in) = ADP + phosphate + 5 H(+)(out). Functionally, produces ATP from ADP in the presence of a proton gradient across the membrane. The catalytic sites are hosted primarily by the beta subunits. This is ATP synthase subunit beta from Bdellovibrio bacteriovorus (strain ATCC 15356 / DSM 50701 / NCIMB 9529 / HD100).